The following is a 149-amino-acid chain: Urease accessory protein UreE (149 aa).

It belongs to the UreE family.

It localises to the cytoplasm. Functionally, involved in urease metallocenter assembly. Binds nickel. Probably functions as a nickel donor during metallocenter assembly. The polypeptide is Urease accessory protein UreE (Corynebacterium efficiens (strain DSM 44549 / YS-314 / AJ 12310 / JCM 11189 / NBRC 100395)).